The following is a 757-amino-acid chain: UDP-N-acetylmuramoyl-L-alanyl-D-glutamate--2,6-diaminopimelate ligase MurE homolog, chloroplastic (757 aa).

Positions 1 to 11 are enriched in low complexity; it reads MATAPLAFHLP. The transit peptide at 1 to 53 directs the protein to the chloroplast; the sequence is MATAPLAFHLPFPFPSASRPPPRLLPPSRRPPAARLAATRRFRPPTADDEPPE. 3 disordered regions span residues 1–112, 126–152, and 172–195; these read MATA…DEFF, FTRR…ADEL, and VSLA…GDDG. The span at 12–30 shows a compositional bias: pro residues; that stretch reads FPFPSASRPPPRLLPPSRR. Acidic residues-rich tracts occupy residues 47-56 and 142-152; these read ADDEPPEAAE and PEEEDGLADEL.

This sequence belongs to the MurCDEF family. MurE subfamily. Component of the plastid-encoded plastid RNA polymerase (PEP) complex.

It localises to the plastid. It is found in the chloroplast. Functionally, required for the activity of the plastid-encoded RNA polymerase (PEP) and full expression of genes transcribed by PEP. The sequence is that of UDP-N-acetylmuramoyl-L-alanyl-D-glutamate--2,6-diaminopimelate ligase MurE homolog, chloroplastic from Oryza sativa subsp. japonica (Rice).